A 146-amino-acid chain; its full sequence is Endoribonuclease YbeY (146 aa).

Zn(2+)-binding residues include His-108, His-112, and His-118.

It belongs to the endoribonuclease YbeY family. The cofactor is Zn(2+).

The protein localises to the cytoplasm. In terms of biological role, single strand-specific metallo-endoribonuclease involved in late-stage 70S ribosome quality control and in maturation of the 3' terminus of the 16S rRNA. This chain is Endoribonuclease YbeY, found in Aster yellows witches'-broom phytoplasma (strain AYWB).